The following is a 919-amino-acid chain: Glutamate receptor ionotropic, kainate 3 (919 aa).

The first 31 residues, 1–31, serve as a signal peptide directing secretion; the sequence is MTAPWRRLRSLVWEYWAGLLVCAFWIPDSRG. Residues 32 to 563 are Extracellular-facing; sequence MPHVIRIGGI…VFSFLNPLSP (532 aa). N-linked (GlcNAc...) asparagine glycosylation is found at Asn-70, Asn-76, Asn-278, Asn-381, Asn-415, Asn-426, and Asn-433. Cys-99 and Cys-350 form a disulfide bridge. Residues Pro-518, Thr-520, and Arg-525 each coordinate L-glutamate. Asn-548 and Asn-551 each carry an N-linked (GlcNAc...) asparagine glycan. Residues 564–584 traverse the membrane as a helical segment; it reads DIWMYVLLAYLGVSCVLFVIA. Over 585–636 the chain is Cytoplasmic; it reads RFSPYEWYDAHPCNPGSEVVENNFTLLNSFWFGMGSLMQQGSELMPKALSTR. The helical transmembrane segment at 637–657 threads the bilayer; the sequence is IIGGIWWFFTLIIISSYTANL. The Extracellular portion of the chain corresponds to 658-820; sequence AAFLTVERME…KEASALGIQK (163 aa). Residues Ala-691, Thr-692, and Glu-739 each coordinate L-glutamate. Residue Asn-752 is glycosylated (N-linked (GlcNAc...) asparagine). The chain crosses the membrane as a helical span at residues 821 to 841; it reads IGGIFIVLAAGLVLSVLVAVG. Over 842-919 the chain is Cytoplasmic; the sequence is EFVYKLRKTA…CSTSLAPVFP (78 aa). At Ser-869 the chain carries Phosphoserine. A Glycyl lysine isopeptide (Lys-Gly) (interchain with G-Cter in SUMO1) cross-link involves residue Lys-887.

Belongs to the glutamate-gated ion channel (TC 1.A.10.1) family. GRIK3 subfamily. In terms of assembly, homotetramer, and heterotetramer with either GRIK4 or GRIK5. Can form functional heteromeric receptors with GRIK2. Interacts with PRKCABP. Interacts with NETO2.

Its subcellular location is the cell membrane. The protein resides in the postsynaptic cell membrane. It catalyses the reaction Ca(2+)(in) = Ca(2+)(out). Functionally, ionotropic glutamate receptor that functions as a cation-permeable ligand-gated ion channel, gated by L-glutamate and the glutamatergic agonist kainic acid. Binding of the excitatory neurotransmitter L-glutamate induces a conformation change, leading to the opening of the cation channel, and thereby converts the chemical signal to an electrical impulse. The receptor then desensitizes rapidly and enters a transient inactive state, characterized by the presence of bound agonist. In association with GRIK2, involved in presynaptic facilitation of glutamate release at hippocampal mossy fiber synapses. In Homo sapiens (Human), this protein is Glutamate receptor ionotropic, kainate 3 (GRIK3).